The following is a 740-amino-acid chain: E3 ubiquitin-protein ligase WAV3 (740 aa).

A disordered region spans residues 14 to 105 (PRNSDAAAPD…AISNPSSPRS (92 aa)). Low complexity predominate over residues 49 to 67 (SGGSNPSTPRSTSSPSLRC). The span at 71–90 (DAQTPTAEQTSTPRSATKSP) shows a compositional bias: polar residues. An RING-type; atypical zinc finger spans residues 122–167 (CGICLNSVKTGQGTAKYTAECSHAFHFPCIADYVRKQGKLVCPVCN). Positions 332 to 476 (DLVVVVDVGG…IPVTEHGFGE (145 aa)) constitute a VWFA domain. A disordered region spans residues 677-709 (QSQHQQQHNQRRRGSERETTTTMTLMDENGEPL).

As to quaternary structure, interacts with SINAT1, SINAT2, SINAT3, SINAT4, SINAT5, TOR1/SPR2 and FIP2. Expressed in root tips and leaf primordia.

The enzyme catalyses S-ubiquitinyl-[E2 ubiquitin-conjugating enzyme]-L-cysteine + [acceptor protein]-L-lysine = [E2 ubiquitin-conjugating enzyme]-L-cysteine + N(6)-ubiquitinyl-[acceptor protein]-L-lysine.. Functionally, E3 ubiquitin-protein ligase involved in the regulation of root growth. Acts as a positive regulator of root gravitropism. Possesses E3 protein ligase activity in vitro. The sequence is that of E3 ubiquitin-protein ligase WAV3 from Arabidopsis thaliana (Mouse-ear cress).